We begin with the raw amino-acid sequence, 425 residues long: Glutamate-1-semialdehyde 2,1-aminomutase (425 aa).

Lys265 bears the N6-(pyridoxal phosphate)lysine mark.

This sequence belongs to the class-III pyridoxal-phosphate-dependent aminotransferase family. HemL subfamily. In terms of assembly, homodimer. Pyridoxal 5'-phosphate serves as cofactor.

The protein resides in the cytoplasm. The enzyme catalyses (S)-4-amino-5-oxopentanoate = 5-aminolevulinate. It participates in porphyrin-containing compound metabolism; protoporphyrin-IX biosynthesis; 5-aminolevulinate from L-glutamyl-tRNA(Glu): step 2/2. This Clostridium perfringens (strain 13 / Type A) protein is Glutamate-1-semialdehyde 2,1-aminomutase.